The following is a 710-amino-acid chain: MINALSCIATEKVAHYINDGIYRNLKYKLDSKSSDQVYSKLLKISRGLIHEYNHEIGQRLELRNVDYGKFKIDRNTVMVLKKHCLESLGIGDLDYIGYYYRDLIDDNTIDIFELLKAILNNETRRNLHYLDIKGSHAFSKKWTKNIGTILPVLRSLIICGRHLQSDDFQQLCESIPNLTYLDISETNVPNISGISSLKNLESLIMRSVELECFEQFVDLFNLTGLRILDVSRSMYKHDTKIINQYVQSNKVLKELRFLECSGTDINKNLLEQILNSHDNLQQVAAINCHIRSLSLHHEVFLLNTATLTSSLKSLTHYLGVHRISSVERVLENMLHLFPKYDPDLDNRFDFSECVKIIINSALKIESSLGIQGYGTLCLWHIARNQDARFQPFDLYQLVCKLLDGVYNNGRLFIATKDFNISLWRTIESLLKLLESSLKPMSYERVCRIAGLCISRNEVDDEMKTRAIPIFATYIKRISSQSVYYIDFNHKLMPKIILHLKKSIELRKTYWITFCLDILTQITQNSADACEKLAECEEMNVLLECFGNLTKASDHLKILKILKNVLLELTDKNVKHVAIDARISVLQERLDEWDDERAYYVFTVLALIISNFPTIVNREPANSLIRECFPEISNVIKIPVSDSKIYVKNGILKKILKDSREDGSLLWALLVIKSSMEQDKSFVNLLTTEMSNLNTNSEIIMNMKAEIKNLI.

Residues 597 to 615 (AYYVFTVLALIISNFPTIV) form a helical membrane-spanning segment.

It is found in the membrane. This is Gastrulation-defective protein 3 (gadr-3) from Caenorhabditis elegans.